Reading from the N-terminus, the 1015-residue chain is Transposase for transposon Tn3 (1015 aa).

It belongs to the transposase 7 family.

In terms of biological role, required for transposition of transposon Tn3. This is Transposase for transposon Tn3 (tnpA) from Escherichia coli.